Consider the following 243-residue polypeptide: Precursor of CEP9 (243 aa).

Positions 1 to 26 (MKLLSITLTSIVISMVFYQTPITTEA) are cleaved as a signal peptide. Positions 28-44 (SLRKTNDQDHFKAGFTD) are excised as a propeptide. Disordered regions lie at residues 42–63 (FTDD…KKGN), 91–173 (KTGS…VKGF), and 189–243 (NGQD…EPKA). A Hydroxyproline; partial modification is found at proline 48. Hydroxyproline is present on proline 51. A Hydroxyproline; partial modification is found at proline 55. The propeptide occupies 60–96 (KKGNVNVEGFQDDFKPTEGRKLLKTNVQDHFKTGSTD). A hydroxyproline mark is found at proline 100, proline 103, and proline 107. A propeptide spanning residues 112 to 148 (KKGNVNVESSEDDFKHKEGRKLQQTNGQNHFKTGSTD) is cleaved from the precursor. The span at 133-147 (LQQTNGQNHFKTGST) shows a compositional bias: polar residues. Residues proline 152, proline 155, and proline 159 each carry the hydroxyproline modification. The propeptide occupies 164–200 (KKGHANVKGFKDDFAPTEEIRLQKMNGQDHFKTGSTD). 3 positions are modified to hydroxyproline: proline 204, proline 207, and proline 211. Residues 216 to 219 (KKGD) constitute a propeptide that is removed on maturation. Hydroxyproline is present on residues proline 223, proline 226, and proline 230. A propeptide spanning residues 235–243 (AVKNDEPKA) is cleaved from the precursor.

Belongs to the C-terminally encoded plant signaling peptide (CEP) family. Interacts with CEP receptors (e.g. CEPR1 and CEPR2). Hydroxylated peptide is more active than non-hydroxylated peptide. Post-translationally, the mature small signaling peptide is generated by proteolytic processing of the longer precursor. Expressed in lateral root primordia and in lateral roots excluding the meristem region. Also present in the aerial tissues, such as leaf petioles and the shoot apex region.

It localises to the secreted. The protein localises to the extracellular space. It is found in the apoplast. In terms of biological role, extracellular signaling peptide that represses primary root growth rate and significantly inhibits lateral root formation. Modulates leaf morphology. Regulates systemic nitrogen (N)-demand signaling. Mediates up-regulation of genes involved in N uptake and assimilation pathways. This Arabidopsis thaliana (Mouse-ear cress) protein is Precursor of CEP9.